A 43-amino-acid polypeptide reads, in one-letter code: Large ribosomal subunit protein uL11 (43 aa).

This sequence belongs to the universal ribosomal protein uL11 family. As to quaternary structure, part of the ribosomal stalk of the 50S ribosomal subunit. Interacts with L10 and the large rRNA to form the base of the stalk. L10 forms an elongated spine to which L12 dimers bind in a sequential fashion forming a multimeric L10(L12)X complex. In terms of processing, one or more lysine residues are methylated.

Functionally, forms part of the ribosomal stalk which helps the ribosome interact with GTP-bound translation factors. This chain is Large ribosomal subunit protein uL11 (rplK), found in Streptomyces galbus.